The following is a 754-amino-acid chain: 5-methyltetrahydropteroyltriglutamate--homocysteine methyltransferase (754 aa).

Residues 15 to 18 and Lys-114 each bind 5-methyltetrahydropteroyltri-L-glutamate; that span reads RELK. L-homocysteine-binding positions include 430 to 432 and Glu-483; that span reads IGS. L-methionine-binding positions include 430 to 432 and Glu-483; that span reads IGS. 5-methyltetrahydropteroyltri-L-glutamate contacts are provided by residues 514–515 and Trp-560; that span reads RC. Asp-598 provides a ligand contact to L-homocysteine. L-methionine is bound at residue Asp-598. Glu-604 is a 5-methyltetrahydropteroyltri-L-glutamate binding site. 3 residues coordinate Zn(2+): His-641, Cys-643, and Glu-665. His-694 functions as the Proton donor in the catalytic mechanism. Zn(2+) is bound at residue Cys-726.

Belongs to the vitamin-B12 independent methionine synthase family. Zn(2+) serves as cofactor.

It catalyses the reaction 5-methyltetrahydropteroyltri-L-glutamate + L-homocysteine = tetrahydropteroyltri-L-glutamate + L-methionine. It functions in the pathway amino-acid biosynthesis; L-methionine biosynthesis via de novo pathway; L-methionine from L-homocysteine (MetE route): step 1/1. Catalyzes the transfer of a methyl group from 5-methyltetrahydrofolate to homocysteine resulting in methionine formation. The protein is 5-methyltetrahydropteroyltriglutamate--homocysteine methyltransferase of Campylobacter jejuni subsp. doylei (strain ATCC BAA-1458 / RM4099 / 269.97).